The primary structure comprises 429 residues: Threonine synthase (429 aa).

Lys-108 carries the N6-(pyridoxal phosphate)lysine modification.

It belongs to the threonine synthase family. Pyridoxal 5'-phosphate is required as a cofactor.

The catalysed reaction is O-phospho-L-homoserine + H2O = L-threonine + phosphate. It participates in amino-acid biosynthesis; L-threonine biosynthesis; L-threonine from L-aspartate: step 5/5. Its function is as follows. Catalyzes the gamma-elimination of phosphate from L-phosphohomoserine and the beta-addition of water to produce L-threonine. The protein is Threonine synthase (thrC) of Buchnera aphidicola subsp. Acyrthosiphon pisum (strain APS) (Acyrthosiphon pisum symbiotic bacterium).